Here is a 368-residue protein sequence, read N- to C-terminus: F-box only protein 28 (368 aa).

Residues 1-11 (MAAAAEERMAE) show a composition bias toward basic and acidic residues. The tract at residues 1-56 (MAAAAEERMAEEGGGGQGDGGSSLASGSTQRQPPPPAPQHPQPGSQALPAPALAPD) is disordered. Positions 12 to 21 (EGGGGQGDGG) are enriched in gly residues. The segment covering 22–31 (SSLASGSTQR) has biased composition (low complexity). Positions 32 to 41 (QPPPPAPQHP) are enriched in pro residues. Positions 42 to 56 (QPGSQALPAPALAPD) are enriched in low complexity. Residues 61–109 (NNTLVALPIVAIENILSFMSYDEISQLRLVCKRMDLVCQRMLNQGFLKV) form the F-box domain. Phosphoserine occurs at positions 235 and 242. At Thr270 the chain carries Phosphothreonine. A disordered region spans residues 328–368 (MESAVGNSSGSGQNEESPRKRKKATEAIDSLRKSKRLRNRK). Residues 333-342 (GNSSGSGQNE) are compositionally biased toward low complexity. Position 344 is a phosphoserine (Ser344).

Part of a SCF (SKP1-cullin-F-box) protein ligase complex.

It is found in the chromosome. The protein resides in the centromere. The protein localises to the kinetochore. In terms of biological role, probably recognizes and binds to some phosphorylated proteins and promotes their ubiquitination and degradation. In Homo sapiens (Human), this protein is F-box only protein 28 (FBXO28).